A 102-amino-acid polypeptide reads, in one-letter code: Major basic nuclear protein 2 (102 aa).

Residues 1–11 (MKAMKATKKAM) show a composition bias toward basic residues. The tract at residues 1 to 43 (MKAMKATKKAMTKTGLAEALAPKPSSARRIAPPSSRAWPPSAQ) is disordered. The segment covering 21-42 (APKPSSARRIAPPSSRAWPPSA) has biased composition (low complexity).

The protein resides in the nucleus. This Crypthecodinium cohnii (Dinoflagellate) protein is Major basic nuclear protein 2 (HCc2).